The following is a 1048-amino-acid chain: Probable inactive receptor kinase At5g10020 (1048 aa).

The N-terminal stretch at 1-21 is a signal peptide; it reads MSHFLTFCFLSLLLLLHGANA. LRR repeat units lie at residues 100-120, 124-146, 148-169, 172-194, 196-217, 224-246, 250-272, 273-294, 298-319, 320-342, 365-387, 389-411, 412-433, 436-457, 469-491, 493-516, 517-539, and 540-560; these read RLRN…PSLG, SLQH…ISEL, SLNH…GFRN, QLRS…FTEL, NVEF…PMEN, TLRH…ESIG, NLEI…GSQP, SLRI…ELLQ, PLLE…INSS, TLTM…FKSC, TPDV…TSAF, RLSV…WGDS, QFSV…SFFT, SLRS…RGSR, QMEL…IGTM, KIKV…NKLS, GLLF…LPSQ, and MVGF…DLRS. A helical membrane pass occupies residues 602 to 622; the sequence is IAIIVASVGAAIMILFVLFAY. The interval 696 to 733 is disordered; the sequence is EQGAPATSAPTNLLDDYPAASGRKSSSGGSPLSSSPRF. A compositionally biased stretch (low complexity) spans 716 to 733; that stretch reads SGRKSSSGGSPLSSSPRF. Residue serine 744 is modified to Phosphoserine. Residues 768 to 1045 enclose the Protein kinase domain; sequence RAPAEVLGRS…IRQVLDHLTS (278 aa). ATP contacts are provided by residues 774–782 and lysine 796; that span reads LGRSSHGTL.

It belongs to the protein kinase superfamily.

Its subcellular location is the membrane. This is Probable inactive receptor kinase At5g10020 from Arabidopsis thaliana (Mouse-ear cress).